We begin with the raw amino-acid sequence, 285 residues long: Ret finger protein-like 4A (285 aa).

The RING-type; degenerate zinc finger occupies 11 to 53; the sequence is CYFCFRYLENPVYLNCGYICCFQCLDSLEKSPEGDGVLCPNCS. The 199-residue stretch at 78-276 folds into the B30.2/SPRY domain; it reads EPQLNFILTM…ISICPVMNPS (199 aa).

As to quaternary structure, interacts with PSMB1, UBE2A and CCNB1.

Its subcellular location is the cytoplasm. The protein localises to the nucleus. The sequence is that of Ret finger protein-like 4A (Rfpl4a) from Rattus norvegicus (Rat).